The following is a 347-amino-acid chain: Aspartate-semialdehyde dehydrogenase (347 aa).

NADP(+) is bound by residues 13–16 and 41–42; these read TGAV and RS. Arg101 serves as a coordination point for phosphate. Cys132 functions as the Acyl-thioester intermediate in the catalytic mechanism. Substrate is bound at residue Gln159. NADP(+) is bound at residue 162 to 163; sequence SG. Lys216 provides a ligand contact to phosphate. Residue Arg238 coordinates substrate. His245 (proton acceptor) is an active-site residue. Asn319 contributes to the NADP(+) binding site.

The protein belongs to the aspartate-semialdehyde dehydrogenase family. As to quaternary structure, homodimer.

It catalyses the reaction L-aspartate 4-semialdehyde + phosphate + NADP(+) = 4-phospho-L-aspartate + NADPH + H(+). It participates in amino-acid biosynthesis; L-lysine biosynthesis via DAP pathway; (S)-tetrahydrodipicolinate from L-aspartate: step 2/4. The protein operates within amino-acid biosynthesis; L-methionine biosynthesis via de novo pathway; L-homoserine from L-aspartate: step 2/3. Its pathway is amino-acid biosynthesis; L-threonine biosynthesis; L-threonine from L-aspartate: step 2/5. Its function is as follows. Catalyzes the NADPH-dependent formation of L-aspartate-semialdehyde (L-ASA) by the reductive dephosphorylation of L-aspartyl-4-phosphate. The sequence is that of Aspartate-semialdehyde dehydrogenase from Legionella pneumophila.